The sequence spans 428 residues: Elongation factor 1-alpha (428 aa).

Residues 5–215 enclose the tr-type G domain; sequence KPHVNIVFIG…ALDQIPEPPK (211 aa). A G1 region spans residues 14 to 21; that stretch reads GHVDHGKS. 14-21 contributes to the GTP binding site; the sequence is GHVDHGKS. Residue serine 21 participates in Mg(2+) binding. A G2 region spans residues 68-72; the sequence is GITID. The G3 stretch occupies residues 89-92; sequence DAPG. GTP contacts are provided by residues 89–93 and 144–147; these read DAPGH and NKMD. Residues 144-147 form a G4 region; that stretch reads NKMD. The segment at 181–183 is G5; sequence SAW.

It belongs to the TRAFAC class translation factor GTPase superfamily. Classic translation factor GTPase family. EF-Tu/EF-1A subfamily.

The protein localises to the cytoplasm. The enzyme catalyses GTP + H2O = GDP + phosphate + H(+). Its function is as follows. GTP hydrolase that promotes the GTP-dependent binding of aminoacyl-tRNA to the A-site of ribosomes during protein biosynthesis. The chain is Elongation factor 1-alpha from Thermococcus onnurineus (strain NA1).